A 266-amino-acid polypeptide reads, in one-letter code: Putative hydro-lyase VF_1377 (266 aa).

This sequence belongs to the D-glutamate cyclase family.

This is Putative hydro-lyase VF_1377 from Aliivibrio fischeri (strain ATCC 700601 / ES114) (Vibrio fischeri).